The primary structure comprises 131 residues: Phosphoribosyl-AMP cyclohydrolase (131 aa).

Mg(2+) is bound at residue Asp-76. Cys-77 contacts Zn(2+). 2 residues coordinate Mg(2+): Asp-78 and Asp-80. Zn(2+) contacts are provided by Cys-94 and Cys-101.

Belongs to the PRA-CH family. As to quaternary structure, homodimer. Requires Mg(2+) as cofactor. It depends on Zn(2+) as a cofactor.

Its subcellular location is the cytoplasm. It carries out the reaction 1-(5-phospho-beta-D-ribosyl)-5'-AMP + H2O = 1-(5-phospho-beta-D-ribosyl)-5-[(5-phospho-beta-D-ribosylamino)methylideneamino]imidazole-4-carboxamide. It functions in the pathway amino-acid biosynthesis; L-histidine biosynthesis; L-histidine from 5-phospho-alpha-D-ribose 1-diphosphate: step 3/9. Its function is as follows. Catalyzes the hydrolysis of the adenine ring of phosphoribosyl-AMP. The polypeptide is Phosphoribosyl-AMP cyclohydrolase (Stutzerimonas stutzeri (strain A1501) (Pseudomonas stutzeri)).